Here is a 189-residue protein sequence, read N- to C-terminus: Ras-like protein rasC (189 aa).

11-18 (GDGGVGKS) provides a ligand contact to GTP. The Effector region motif lies at 33 to 41 (YDPTIENSY). GTP is bound by residues 58–62 (DTAGQ) and 117–120 (NKAD). Cysteine methyl ester is present on Cys186. Cys186 carries S-geranylgeranyl cysteine lipidation. A propeptide spans 187–189 (IIL) (removed in mature form).

This sequence belongs to the small GTPase superfamily. Ras family.

It localises to the cell membrane. It carries out the reaction GTP + H2O = GDP + phosphate + H(+). With respect to regulation, alternates between an inactive form bound to GDP and an active form bound to GTP. Activated by a guanine nucleotide-exchange factor (GEF) and inactivated by a GTPase-activating protein (GAP). Its function is as follows. Ras proteins bind GDP/GTP and possess intrinsic GTPase activity. This is Ras-like protein rasC (rasC) from Dictyostelium discoideum (Social amoeba).